The following is a 365-amino-acid chain: Serine protease 40 (365 aa).

Positions 1–34 (MCGIRAKKSGLGGYGAGLLAALLGVSFLSQHAQT) are cleaved as a signal peptide. Asparagine 44 carries an N-linked (GlcNAc...) asparagine glycan. The Peptidase S1 domain maps to 69–313 (IYGGQIAGAE…FDKWIKDNKK (245 aa)). A disulfide bond links cysteine 94 and cysteine 110. Catalysis depends on charge relay system residues histidine 109 and aspartate 159. Disulfide bonds link cysteine 193-cysteine 270, cysteine 226-cysteine 249, and cysteine 260-cysteine 288. Serine 264 serves as the catalytic Charge relay system. The disordered stretch occupies residues 312 to 343 (KKSSSNSKPGESPHHPGSPENENPEGDNKNQG).

Belongs to the peptidase S1 family. Expressed in testis. More specifically, abundantly expressed in the haploid round spermatid.

It localises to the cytoplasmic vesicle. The protein localises to the secretory vesicle. The protein resides in the acrosome. Its subcellular location is the secreted. Functionally, may play an important role in the sperm/egg interaction; released during the acrosome reaction. In Mus musculus (Mouse), this protein is Serine protease 40 (Prss40).